Consider the following 351-residue polypeptide: Tryptophan--tRNA ligase 2 (351 aa).

The interval 1–24 is disordered; sequence MPFVDLEVPTMTTPTPAATPARPR. Low complexity predominate over residues 9-24; the sequence is PTMTTPTPAATPARPR. The 'HIGH' region signature appears at 31 to 39; it reads PTGALHLGH. The 'KMSKS' region signature appears at 215–219; it reads KMSKS. Position 218 (K218) interacts with ATP.

Belongs to the class-I aminoacyl-tRNA synthetase family. In terms of assembly, homodimer. Forms a complex with nos; one homodimer of trpS2 binds one homodimer of nos.

It carries out the reaction tRNA(Trp) + L-tryptophan + ATP = L-tryptophyl-tRNA(Trp) + AMP + diphosphate + H(+). Its function is as follows. Catalyzes the formation of 5'adenyl-Trp and tRNA(Trp) but with 5-fold less activity than TrpRS. Increases the solubility of the nitric oxide synthase oxygenase (nos), as well as its affinity for substrate L-arginine and its nitric-oxide synthase activity. The complex between trpS2 and nos catalyzes the regioselective nitration of tryptophan at the 4-position. The sequence is that of Tryptophan--tRNA ligase 2 (trpS2) from Deinococcus radiodurans (strain ATCC 13939 / DSM 20539 / JCM 16871 / CCUG 27074 / LMG 4051 / NBRC 15346 / NCIMB 9279 / VKM B-1422 / R1).